Reading from the N-terminus, the 566-residue chain is MDIRPIIISLLISTCVQADRICVGYLSTNSTEKVDTLLENDVPVTSSIDLVETNHTGTYCSLDGISPVHLGDCSFEGWIVGNPACTSNFGIREWSYLIEDPSAPHGLCYPGELDNNGELRHLFSGIRSFSRTELIAPTSWGEVNDGATSACRDNTGTNSFYRNLVWFVKKGNSYPVISRTYNNTTGRDVLVMWGLHHPVSTDETKSLYVNSDPYTLVSTSSWSKKYKLETGVRPGYNGQRSWMKIYWVLMHPGESITFESNGGLLAPRYGYIIEEYGKGRIFQSPIRIARCNTRCQTSVGGINTNKTFQNIERNALGNCPKYIKSGQLKLATGLRNVPAISNRGLFGAIAGFIEGGWPGLINGWYGFQHQNEQGVGIAADKESTQKAIDQITTKINNIIDKMNGNYDSIRGEFSQVEQRINMLADRIDDAVTDVWSYNAKLLVLLENDKTLDMHDANVRNLHEQVRRTLKANAIDEGNGCFELLHKCNDSCMDTIRNGTYNHAEYAEESKLKRQEIEGIKLKSEDNVYKALSIYSCIASSVVLVGLILAFIMWACSSGNCRFNVCI.

A signal peptide spans 1–18; sequence MDIRPIIISLLISTCVQA. Topologically, residues 19 to 532 are extracellular; it reads DRICVGYLST…SEDNVYKALS (514 aa). Cystine bridges form between cysteine 22/cysteine 480, cysteine 60/cysteine 291, cysteine 73/cysteine 85, cysteine 108/cysteine 151, cysteine 295/cysteine 319, and cysteine 487/cysteine 491. Asparagine 29 and asparagine 54 each carry an N-linked (GlcNAc...) asparagine; by host glycan. 5 N-linked (GlcNAc...) asparagine; by host glycosylation sites follow: asparagine 182, asparagine 183, asparagine 305, asparagine 488, and asparagine 497. A helical transmembrane segment spans residues 533-553; the sequence is IYSCIASSVVLVGLILAFIMW. The Cytoplasmic segment spans residues 554–566; it reads ACSSGNCRFNVCI. Residues cysteine 555 and cysteine 565 are each lipidated (S-palmitoyl cysteine; by host).

Belongs to the influenza viruses hemagglutinin family. In terms of assembly, homotrimer of disulfide-linked HA1-HA2. In terms of processing, palmitoylated. Post-translationally, in natural infection, inactive HA is matured into HA1 and HA2 outside the cell by one or more trypsin-like, arginine-specific endoprotease secreted by the bronchial epithelial cells. One identified protease that may be involved in this process is secreted in lungs by club cells.

It is found in the virion membrane. The protein resides in the host apical cell membrane. Its function is as follows. Binds to sialic acid-containing receptors on the cell surface, bringing about the attachment of the virus particle to the cell. This attachment induces virion internalization of about two third of the virus particles through clathrin-dependent endocytosis and about one third through a clathrin- and caveolin-independent pathway. Plays a major role in the determination of host range restriction and virulence. Class I viral fusion protein. Responsible for penetration of the virus into the cell cytoplasm by mediating the fusion of the membrane of the endocytosed virus particle with the endosomal membrane. Low pH in endosomes induces an irreversible conformational change in HA2, releasing the fusion hydrophobic peptide. Several trimers are required to form a competent fusion pore. Binds to sialic acid-containing receptors on the cell surface, bringing about the attachment of the virus particle to the cell. This attachment induces virion internalization either through clathrin-dependent endocytosis or through clathrin- and caveolin-independent pathway. Plays a major role in the determination of host range restriction and virulence. Class I viral fusion protein. Responsible for penetration of the virus into the cell cytoplasm by mediating the fusion of the membrane of the endocytosed virus particle with the endosomal membrane. Low pH in endosomes induces an irreversible conformational change in HA2, releasing the fusion hydrophobic peptide. Several trimers are required to form a competent fusion pore. This is Hemagglutinin from Aves (whales).